A 227-amino-acid polypeptide reads, in one-letter code: AN1-type zinc finger protein 3 (227 aa).

An A20-type zinc finger spans residues 12 to 44 (PSLPPRCPCGFWGSSKTMNLCSKCFADFQKKQP). C18, C20, C32, and C35 together coordinate Zn(2+). 2 disordered regions span residues 41 to 99 (KKQP…TEEC) and 113 to 151 (PTKR…RSKQ). 2 stretches are compositionally biased toward low complexity: residues 49-59 (TPSTSNSQSDL) and 66-77 (SDNNNTSVTTPT). 2 stretches are compositionally biased toward polar residues: residues 78–96 (LSPS…SPST) and 113–127 (PTKR…SENE). The span at 135-148 (RLVENPERPEESGR) shows a compositional bias: basic and acidic residues. The segment at 151–200 (QKSRRRCFQCQTKLELVQQELGSCRCGYVFCMLHRLPEQHDCTFDHMGRG) adopts an AN1-type zinc-finger fold. Zn(2+) is bound by residues C157, C160, C174, C176, C181, H184, H190, and C192.

Expressed in testis.

The sequence is that of AN1-type zinc finger protein 3 (Zfand3) from Mus musculus (Mouse).